The following is a 96-amino-acid chain: Co-chaperonin GroES (96 aa).

Belongs to the GroES chaperonin family. In terms of assembly, heptamer of 7 subunits arranged in a ring. Interacts with the chaperonin GroEL.

It localises to the cytoplasm. Functionally, together with the chaperonin GroEL, plays an essential role in assisting protein folding. The GroEL-GroES system forms a nano-cage that allows encapsulation of the non-native substrate proteins and provides a physical environment optimized to promote and accelerate protein folding. GroES binds to the apical surface of the GroEL ring, thereby capping the opening of the GroEL channel. The polypeptide is Co-chaperonin GroES (Shewanella halifaxensis (strain HAW-EB4)).